Consider the following 341-residue polypeptide: HTH-type transcriptional repressor PurR (341 aa).

An HTH lacI-type domain is found at 2–56 (ATIKDVAKRANVSTTTVSHVINKTRFVAEETRNAVWAAIKELHYSPSAVARSLKV). The segment at residues 4–23 (IKDVAKRANVSTTTVSHVIN) is a DNA-binding region (H-T-H motif). The DNA-binding element occupies 48–56 (SAVARSLKV). The hypoxanthine site is built by Y73, R190, T192, F221, and D275.

In terms of assembly, homodimer.

Its pathway is purine metabolism; purine nucleotide biosynthesis [regulation]. Functionally, is the main repressor of the genes involved in the de novo synthesis of purine nucleotides, regulating purB, purC, purEK, purF, purHD, purL, purMN and guaBA expression. PurR is allosterically activated to bind its cognate DNA by binding the purine corepressors, hypoxanthine or guanine, thereby effecting transcription repression. The chain is HTH-type transcriptional repressor PurR from Salmonella arizonae (strain ATCC BAA-731 / CDC346-86 / RSK2980).